The following is a 477-amino-acid chain: Bifunctional protein HldE (477 aa).

The ribokinase stretch occupies residues 1-319 (MTVIFPNFSK…NIMNSHICTT (319 aa)). 195–198 (NISE) contributes to the ATP binding site. D264 is a catalytic residue. Residues 346–477 (MTNGVFDILH…NIINAIKRKN (132 aa)) form a cytidylyltransferase region.

In the N-terminal section; belongs to the carbohydrate kinase PfkB family. The protein in the C-terminal section; belongs to the cytidylyltransferase family. As to quaternary structure, homodimer.

It catalyses the reaction D-glycero-beta-D-manno-heptose 7-phosphate + ATP = D-glycero-beta-D-manno-heptose 1,7-bisphosphate + ADP + H(+). The catalysed reaction is D-glycero-beta-D-manno-heptose 1-phosphate + ATP + H(+) = ADP-D-glycero-beta-D-manno-heptose + diphosphate. Its pathway is nucleotide-sugar biosynthesis; ADP-L-glycero-beta-D-manno-heptose biosynthesis; ADP-L-glycero-beta-D-manno-heptose from D-glycero-beta-D-manno-heptose 7-phosphate: step 1/4. It participates in nucleotide-sugar biosynthesis; ADP-L-glycero-beta-D-manno-heptose biosynthesis; ADP-L-glycero-beta-D-manno-heptose from D-glycero-beta-D-manno-heptose 7-phosphate: step 3/4. Functionally, catalyzes the phosphorylation of D-glycero-D-manno-heptose 7-phosphate at the C-1 position to selectively form D-glycero-beta-D-manno-heptose-1,7-bisphosphate. Catalyzes the ADP transfer from ATP to D-glycero-beta-D-manno-heptose 1-phosphate, yielding ADP-D-glycero-beta-D-manno-heptose. This is Bifunctional protein HldE from Blochmanniella pennsylvanica (strain BPEN).